We begin with the raw amino-acid sequence, 416 residues long: Tyrosine--tRNA ligase (416 aa).

Y40 serves as a coordination point for L-tyrosine. The 'HIGH' region signature appears at 45–54 (ATAASLHVGH). Y177 and Q181 together coordinate L-tyrosine. Positions 237–241 (KMGKS) match the 'KMSKS' region motif. Residue K240 participates in ATP binding. The 66-residue stretch at 351 to 416 (LSVAHFLVAA…RKKHKLVRLS (66 aa)) folds into the S4 RNA-binding domain.

It belongs to the class-I aminoacyl-tRNA synthetase family. TyrS type 1 subfamily. Homodimer.

It is found in the cytoplasm. It catalyses the reaction tRNA(Tyr) + L-tyrosine + ATP = L-tyrosyl-tRNA(Tyr) + AMP + diphosphate + H(+). Functionally, catalyzes the attachment of tyrosine to tRNA(Tyr) in a two-step reaction: tyrosine is first activated by ATP to form Tyr-AMP and then transferred to the acceptor end of tRNA(Tyr). In Cereibacter sphaeroides (strain KD131 / KCTC 12085) (Rhodobacter sphaeroides), this protein is Tyrosine--tRNA ligase.